A 202-amino-acid polypeptide reads, in one-letter code: uncharacterized protein (202 aa).

Lys-136 is covalently cross-linked (Isoglutamyl lysine isopeptide (Lys-Gln) (interchain with Q-Cter in protein Pup)).

This is an uncharacterized protein from Mycobacterium tuberculosis (strain ATCC 25618 / H37Rv).